A 479-amino-acid polypeptide reads, in one-letter code: MMLFLIHLMALCCMFVAEVACEQFNSTSNSSSAQSSLIDFQYKGVSIGGWLVLEPYITPSLFNATLSSGETWTDLPVDEYHFCEKLGAKEAEKRLTDHWESMYNETDFKQIKEAGLNMVRIPIGYWSFEKLEGDPYVSGAQDYLDKAIEWSHANDLKVMIDLHGAPNTQNGFDNSGLRNLGYPGWQNKTEYVNHTYKVLQQMFQKYGTGKYASDYKNTIIGIEVLNEPLNPNMDKLKEFYIESYNDGREIQVINNTIFFQEAFQPIGYWDSFLEKGEIKVTETSNGTNHTTTKKADFKNIIIDHHHYEVFTESQVASNVSTHLENIKNYASAIGKEKAKAIVGEWSAALTDCAPWLNGVGLGSRYEGTAPYTNDRVGSCAEFNKSPDKWSKKQKKDYRRFVEMQLYEYSTNSQGWIFWCWKTEGATEWDFRALVKNGIMPQPLDNYKYVKNGTDTSSASAIASNKMTLLLAFLLVILVI.

The first 21 residues, 1–21 (MMLFLIHLMALCCMFVAEVAC), serve as a signal peptide directing secretion. N-linked (GlcNAc...) asparagine glycans are attached at residues Asn-25, Asn-29, Asn-63, Asn-104, Asn-187, and Asn-193. Glu-227 functions as the Proton donor in the catalytic mechanism. 3 N-linked (GlcNAc...) asparagine glycosylation sites follow: Asn-254, Asn-285, and Asn-288. Residue His-306 is the Nucleophile of the active site. N-linked (GlcNAc...) asparagine glycosylation is found at Asn-318 and Asn-451. Ser-456 carries the GPI-anchor amidated serine lipid modification. The propeptide at 457-479 (SASAIASNKMTLLLAFLLVILVI) is removed in mature form.

Belongs to the glycosyl hydrolase 5 (cellulase A) family. Predicted to be a substrate for cleavage by KEX2.

Its subcellular location is the cell membrane. It is found in the secreted. It carries out the reaction Successive hydrolysis of beta-D-glucose units from the non-reducing ends of (1-&gt;3)-beta-D-glucans, releasing alpha-glucose.. In terms of biological role, beta-glucanases participate in the metabolism of beta-glucan, the main structural component of the cell wall. EXG2 is not heavily involved in the exoglucanase function of the adhesion process. This chain is Glucan 1,3-beta-glucosidase 2 (EXG2), found in Candida albicans (strain SC5314 / ATCC MYA-2876) (Yeast).